The following is a 631-amino-acid chain: Cyclic nucleotide-gated channel alpha-3 (631 aa).

The segment covering 1 to 18 has biased composition (polar residues); sequence MAKVNTQCSQPSPTQLSI. 2 disordered regions span residues 1 to 21 and 71 to 98; these read MAKV…IKNA and EVST…RKEE. Topologically, residues 1 to 111 are cytoplasmic; sequence MAKVNTQCSQ…VDPSSNIYYR (111 aa). Residues 87–98 are compositionally biased toward basic and acidic residues; the sequence is KPPDGGEGRKEE. The helical transmembrane segment at 112–133 threads the bilayer; it reads WLTAIALPVFYNWCLLVCRACF. Residues 134-139 lie on the Extracellular side of the membrane; that stretch reads DELQSE. Residues 140-160 form a helical membrane-spanning segment; it reads HLTLWLVLDYSADVLYVLDML. Residues 161 to 187 lie on the Cytoplasmic side of the membrane; that stretch reads VRARTGFLEQGLMVRDTKRLWKHYTKT. A helical transmembrane segment spans residues 188–207; that stretch reads LHFKLDILSLIPTDLAYLKL. Topologically, residues 208 to 211 are extracellular; it reads GVNY. A helical transmembrane segment spans residues 212–229; the sequence is PELRFNRLLKFSRLFEFF. Residues 230–239 lie on the Cytoplasmic side of the membrane; that stretch reads DRTETRTNYP. Residues 239 to 347 are ion conduction pathway; it reads PNVFRIGNLV…GNVGSMISNM (109 aa). A helical transmembrane segment spans residues 240–262; it reads NVFRIGNLVLYTLIIIHWNACIY. Over 263–288 the chain is Extracellular; that stretch reads FAISKFIGFGTDSWVYPNTSKPEYAR. The N-linked (GalNAc...) asparagine glycan is linked to asparagine 280. 2 consecutive transmembrane segments (helical) span residues 289-319 and 320-344; these read LSRK…DEEY and LFVV…GSMI. The selectivity filter stretch occupies residues 306–309; sequence TIGE. The Cytoplasmic portion of the chain corresponds to 345 to 631; the sequence is SNMNAPRVEF…ENSEDASKTD (287 aa). The interval 349 to 426 is C-linker; that stretch reads APRVEFQAKI…TLKKVRIFQD (78 aa). Residues 429–549 form a cyclic nucleotide-binding domain region; that stretch reads AGLLVELVLK…EEKGRQILMK (121 aa). The 3',5'-cyclic GMP site is built by glycine 489, glutamate 490, serine 492, arginine 505, threonine 506, and aspartate 550. Positions 567–610 form a coiled coil; that stretch reads VEEKVEYLESSLDILQTRFARLLAEYSASQMKLKQRLTRLESQM.

Belongs to the cyclic nucleotide-gated cation channel (TC 1.A.1.5) family. CNGA3 subfamily. In terms of assembly, forms heterotetrameric channels composed of CNGA3 and CNGB3 subunits with 3:1 stoichiometry. Prominently expressed in retina.

It localises to the cell membrane. It carries out the reaction Ca(2+)(in) = Ca(2+)(out). It catalyses the reaction Na(+)(in) = Na(+)(out). The enzyme catalyses K(+)(in) = K(+)(out). The catalysed reaction is NH4(+)(in) = NH4(+)(out). It carries out the reaction Rb(+)(in) = Rb(+)(out). It catalyses the reaction Li(+)(in) = Li(+)(out). The enzyme catalyses Cs(+)(in) = Cs(+)(out). Pore-forming subunit of the cone cyclic nucleotide-gated channel. Mediates cone photoresponses at bright light converting transient changes in intracellular cGMP levels into electrical signals. In the dark, cGMP levels are high and keep the channel open enabling a steady inward current carried by Na(+) and Ca(2+) ions that leads to membrane depolarization and neurotransmitter release from synaptic terminals. Upon photon absorption cGMP levels decline leading to channel closure and membrane hyperpolarization that ultimately slows neurotransmitter release and signals the presence of light, the end point of the phototransduction cascade. Pore-forming subunit of the gustatory cyclic nucleotide-gated channel. In the taste buds, may sense oral extracellular pH and conduct ion currents that modulate the excitability of taste cells. Conducts cGMP- and cAMP-gated ion currents, with permeability for monovalent and divalent cations. The chain is Cyclic nucleotide-gated channel alpha-3 from Mus musculus (Mouse).